The sequence spans 103 residues: Large ribosomal subunit protein uL24 (103 aa).

The disordered stretch occupies residues 70 to 103; the sequence is YLDPSTNEPTRLGVRREDGKRVRYAKKSGKDLEN.

It belongs to the universal ribosomal protein uL24 family. As to quaternary structure, part of the 50S ribosomal subunit.

Functionally, one of two assembly initiator proteins, it binds directly to the 5'-end of the 23S rRNA, where it nucleates assembly of the 50S subunit. In terms of biological role, one of the proteins that surrounds the polypeptide exit tunnel on the outside of the subunit. This chain is Large ribosomal subunit protein uL24, found in Lactiplantibacillus plantarum (strain ATCC BAA-793 / NCIMB 8826 / WCFS1) (Lactobacillus plantarum).